Consider the following 233-residue polypeptide: Homeobox protein Hox-D4a (233 aa).

Residues 124 to 129 (VYPWMK) carry the Antp-type hexapeptide motif. The homeobox DNA-binding region spans 145 to 204 (PKRSRTAYTRQQVLELEKEFHFNRYLTRRRRIEIAHTLCLSERQIKIWFQNRRMKWTKDH). The interval 203–233 (DHKLPNTKGRSAPASSHLQSIHKDQTDITSL) is disordered. Residues 223-233 (IHKDQTDITSL) are compositionally biased toward basic and acidic residues.

This sequence belongs to the Antp homeobox family. Deformed subfamily.

It localises to the nucleus. In terms of biological role, sequence-specific transcription factor which is part of a developmental regulatory system that provides cells with specific positional identities on the anterior-posterior axis. The protein is Homeobox protein Hox-D4a (hoxd4a) of Takifugu rubripes (Japanese pufferfish).